An 827-amino-acid polypeptide reads, in one-letter code: Transcription factor SOX-6 (827 aa).

A compositionally biased stretch (polar residues) spans 1–10 (MSSKQATSPF). The disordered stretch occupies residues 1–51 (MSSKQATSPFACTVDGEETMTQDLTSREKEEGSDQHPASHLPLHPIMHNKP). Basic and acidic residues predominate over residues 25-34 (TSREKEEGSD). Thr-119 carries the post-translational modification Phosphothreonine. Positions 184-257 (LAEKERQLST…QHKINLLQQQ (74 aa)) form a coiled coil. Disordered stretches follow at residues 329-360 (HVSH…GGHS) and 380-470 (SPGA…PIGG). Over residues 341 to 357 (GISDRLGRNLDPYEHGG) the composition is skewed to basic and acidic residues. Position 399 is a phosphoserine (Ser-399). Thr-401 carries the phosphothreonine modification. Glycyl lysine isopeptide (Lys-Gly) (interchain with G-Cter in SUMO) cross-links involve residues Lys-404 and Lys-417. 2 stretches are compositionally biased toward polar residues: residues 421-431 (TAQPLNLSSRP) and 439-461 (SPTS…LPNK). Residues Ser-439 and Ser-442 each carry the phosphoserine modification. Residues 620–688 (IKRPMNAFMV…IHLEKYPNYK (69 aa)) constitute a DNA-binding region (HMG box). 2 disordered regions span residues 752–772 (TPSP…EPSL) and 786–827 (ASLA…VSAN). Residues 795 to 808 (NGEDEMEAYDDYED) show a composition bias toward acidic residues.

As to quaternary structure, homodimer. Interacts with DAZAP2. May interact with CENPK. Post-translationally, sumoylation inhibits the transcriptional activity.

The protein localises to the nucleus. It localises to the cytoplasm. Its function is as follows. Transcription factor that plays a key role in several developmental processes, including neurogenesis, chondrocytes differentiation and cartilage formation. Specifically binds the 5'-AACAAT-3' DNA motif present in enhancers and super-enhancers and promotes expression of genes important for chondrogenesis. Required for overt chondrogenesis when condensed prechondrocytes differentiate into early stage chondrocytes: SOX5 and SOX6 cooperatively bind with SOX9 on active enhancers and super-enhancers associated with cartilage-specific genes, and thereby potentiate SOX9's ability to transactivate. Not involved in precartilaginous condensation, the first step in chondrogenesis, during which skeletal progenitors differentiate into prechondrocytes. Together with SOX5, required to form and maintain a pool of highly proliferating chondroblasts between epiphyses and metaphyses, to form columnar chondroblasts, delay chondrocyte prehypertrophy but promote hypertrophy, and to delay terminal differentiation of chondrocytes on contact with ossification fronts. Binds to the proximal promoter region of the myelin protein MPZ gene, and is thereby involved in the differentiation of oligodendroglia in the developing spinal tube. Binds to the gene promoter of MBP and acts as a transcriptional repressor. The sequence is that of Transcription factor SOX-6 from Rattus norvegicus (Rat).